The primary structure comprises 715 residues: MAPPPLPLFSPSLKAPPPPPWLHGSSTQSRDSAPPVPPLPAEATPSKFRIDSPKPAPARKNTKTAAKPLTAGVPGGRTHRAVLGIIRRVRSLELSDAPSPNSVHTSNSGAAAAAFHLTIELSPPREPGQYVVEKEKSRAVPWAAARDEGLKVALRREKKPREPTRAETELETHELRRLRRLARGIGRWARAKKAGVTDEVVKEVRREWASGEELAAVRIVEPLRRSMDRAREILEIKTGGLVVWTKGDMHFVYRGSKYQQNAKHSHTFLTNVHKDDAFQENDQSICGQKDEEPVKGTLYEREVNRLLDTLGPRFVDWWWDTPLPVDADLLPEFVPGSKTPYRLCPPGVRPTLADEELTYLRKLARLLPTHFALGRNTRLQGLAAAILKLWEKSLIAKIAVKIGIQNTNNEQMAWNLKHLTGGTVILRNKDFIILYRGKDFLPGGVAQTVIQREAQVHDEQVKEEEARLKAVDSLQMVGELSEESSLGTFREYQGFHAKFVHENTENSNTMIELEAEKYRLEKELKDHEWKLSVLNKKIERSNQALAKLHSSWSPSEQSADREHLTEEEKIMFRRIGRKMDGLVLLGRRGIFDGVIEEIHQHWKHKEVVKVITKQNQTRQIMYAASLLEVETGGILIAVEKLTTSHAIILYRGKNYRRPAKSSFSNLLTKREALRRSIEVQRRGSMKYFVRERQKSILELKRKLRYVTRQIRYRTP.

Pro residues predominate over residues 1 to 21 (MAPPPLPLFSPSLKAPPPPPW). The N-terminal 40 residues, 1–40 (MAPPPLPLFSPSLKAPPPPPWLHGSSTQSRDSAPPVPPLP), are a transit peptide targeting the chloroplast. A disordered region spans residues 1–76 (MAPPPLPLFS…KPLTAGVPGG (76 aa)). CRM domains follow at residues 168 to 265 (TELE…AKHS) and 350 to 447 (PTLA…GVAQ). Coiled-coil stretches lie at residues 448-473 (TVIQREAQVHDEQVKEEEARLKAVDS) and 502-550 (ENTE…KLHS). The CRM 3 domain maps to 562-662 (EHLTEEEKIM…KNYRRPAKSS (101 aa)).

As to quaternary structure, homodimer. Interacts with RNA, specifically with atpF intron. Part of large ribonucleo-protein complexes that include group IIA introns and CRS1. In terms of tissue distribution, more expressed in leaves than in roots.

It is found in the plastid. The protein localises to the chloroplast stroma. Its function is as follows. Required for the splicing of group IIA introns in chloroplasts, and especially for atpF, by regulating the intron folding. Forms splicing particles with RNA. Also involved in chloroplast protein translation. The polypeptide is Chloroplastic group IIA intron splicing facilitator CRS1, chloroplastic (CRS1) (Zea mays (Maize)).